Reading from the N-terminus, the 268-residue chain is Small ribosomal subunit protein eS1 (268 aa).

The protein belongs to the eukaryotic ribosomal protein eS1 family. As to quaternary structure, component of the small ribosomal subunit. Mature ribosomes consist of a small (40S) and a large (60S) subunit. The 40S subunit contains about 33 different proteins and 1 molecule of RNA (18S). The 60S subunit contains about 49 different proteins and 3 molecules of RNA (28S, 5.8S and 5S).

The protein localises to the cytoplasm. The polypeptide is Small ribosomal subunit protein eS1 (Artemia franciscana (Brine shrimp)).